Here is a 281-residue protein sequence, read N- to C-terminus: Large ribosomal subunit protein uL2 (281 aa).

The segment at 215–281 (LGRRPHTRGV…RRNNRKDSKK (67 aa)) is disordered. The segment covering 258–269 (KTRDNKSTDKFI) has biased composition (basic and acidic residues). The segment covering 270 to 281 (VRRRNNRKDSKK) has biased composition (basic residues).

It belongs to the universal ribosomal protein uL2 family. In terms of assembly, part of the 50S ribosomal subunit. Forms a bridge to the 30S subunit in the 70S ribosome.

Its function is as follows. One of the primary rRNA binding proteins. Required for association of the 30S and 50S subunits to form the 70S ribosome, for tRNA binding and peptide bond formation. It has been suggested to have peptidyltransferase activity; this is somewhat controversial. Makes several contacts with the 16S rRNA in the 70S ribosome. The polypeptide is Large ribosomal subunit protein uL2 (Pelagibacter ubique (strain HTCC1062)).